The chain runs to 509 residues: UDP-N-acetylmuramoyl-L-alanyl-D-glutamate--2,6-diaminopimelate ligase (509 aa).

Ser32 serves as a coordination point for UDP-N-acetyl-alpha-D-muramoyl-L-alanyl-D-glutamate. Position 117 to 123 (117 to 123 (GTNGKTT)) interacts with ATP. UDP-N-acetyl-alpha-D-muramoyl-L-alanyl-D-glutamate contacts are provided by residues 159 to 160 (TT), Ser186, Gln192, and Arg194. The residue at position 226 (Lys226) is an N6-carboxylysine. Meso-2,6-diaminopimelate is bound by residues Arg401, 425-428 (DNPR), Gly476, and Glu480. Positions 425–428 (DNPR) match the Meso-diaminopimelate recognition motif motif.

It belongs to the MurCDEF family. MurE subfamily. It depends on Mg(2+) as a cofactor. Carboxylation is probably crucial for Mg(2+) binding and, consequently, for the gamma-phosphate positioning of ATP.

It is found in the cytoplasm. It carries out the reaction UDP-N-acetyl-alpha-D-muramoyl-L-alanyl-D-glutamate + meso-2,6-diaminopimelate + ATP = UDP-N-acetyl-alpha-D-muramoyl-L-alanyl-gamma-D-glutamyl-meso-2,6-diaminopimelate + ADP + phosphate + H(+). It participates in cell wall biogenesis; peptidoglycan biosynthesis. Functionally, catalyzes the addition of meso-diaminopimelic acid to the nucleotide precursor UDP-N-acetylmuramoyl-L-alanyl-D-glutamate (UMAG) in the biosynthesis of bacterial cell-wall peptidoglycan. The chain is UDP-N-acetylmuramoyl-L-alanyl-D-glutamate--2,6-diaminopimelate ligase from Prochlorococcus marinus (strain NATL2A).